The sequence spans 263 residues: Protein MARD1 (263 aa).

The segment at 219–263 (SFLSRCFTCKKNLDQKQDIYIYRGEKGFCSSECRYQEMLLDQMET) adopts an FLZ-type zinc-finger fold.

This sequence belongs to the FLZ family. As to quaternary structure, interacts with KIN10 and KIN11 via its FLZ-type zinc finger domain. Interacts with KINB1 and KINB2 via its N-terminal part. Interacts with TZF4, TZF5 and TZF6. Interacts with MPK3 and MPK6.

The protein resides in the cytoplasm. It localises to the stress granule. Its subcellular location is the P-body. Functionally, may act as an adapter to facilitate the interaction of SnRK1 complex with effector proteins, conferring tissue- and stimulus-type specific differences in the SnRK1 regulation pathway. Involved in seed dormancy control. This chain is Protein MARD1, found in Arabidopsis thaliana (Mouse-ear cress).